A 157-amino-acid polypeptide reads, in one-letter code: MKIKIICFGKIKDKNITALINEYLSKINHFTNLTIVELSEEKINNENSIGEIEEALKKESKKLIPYLENSFNVLLDIKGVQMDSIKFANSINQNLIISKDINFYIGSSHGISESIKNKFNLKLSFSELTFNHQIFRLILLEQIYRAFSILNNTKYHK.

Residues leucine 75, glycine 106, and 125 to 130 (FSELTF) contribute to the S-adenosyl-L-methionine site.

The protein belongs to the RNA methyltransferase RlmH family. In terms of assembly, homodimer.

The protein localises to the cytoplasm. The catalysed reaction is pseudouridine(1915) in 23S rRNA + S-adenosyl-L-methionine = N(3)-methylpseudouridine(1915) in 23S rRNA + S-adenosyl-L-homocysteine + H(+). In terms of biological role, specifically methylates the pseudouridine at position 1915 (m3Psi1915) in 23S rRNA. This is Ribosomal RNA large subunit methyltransferase H from Malacoplasma penetrans (strain HF-2) (Mycoplasma penetrans).